A 277-amino-acid chain; its full sequence is F-actin-capping protein subunit beta isoforms 1 and 2 (277 aa).

Position 2 is an N-acetylserine (Ser2).

The protein belongs to the F-actin-capping protein beta subunit family. In terms of assembly, component of the F-actin capping complex, composed of a heterodimer of an alpha and a beta subunit. Component of the WASH complex. Component of the F-actin capping complex, composed of a heterodimer of an alpha and a beta subunit. Subunit of dynactin, a multiprotein complex part of a tripartite complex with dynein and a adapter, such as BICDL1, BICD2 or HOOK3. The dynactin complex is built around ACTR1A/ACTB filament and consists of an actin-related filament composed of a shoulder domain, a pointed end and a barbed end. Its length is defined by its flexible shoulder domain. In terms of tissue distribution, isoform 1 is detected in pectoral muscle, cardiac muscle and gizzard. Isoform 2 is detected in brain and liver (at protein level). Isoform 2 is the predominant isoform of nonmuscle tissues and isoform 1 is the predominant isoform of muscle tissues.

The protein resides in the cytoplasm. It is found in the myofibril. The protein localises to the sarcomere. It localises to the z line. Its subcellular location is the i band. The protein resides in the cytoskeleton. Functionally, F-actin-capping proteins bind in a Ca(2+)-independent manner to the fast growing ends of actin filaments (barbed end) thereby blocking the exchange of subunits at these ends. Unlike other capping proteins (such as gelsolin and severin), these proteins do not sever actin filaments. May play a role in the regulation of cell morphology and cytoskeletal organization. Forms, with CAPZB, the barbed end of the fast growing ends of actin filaments in the dynactin complex and stabilizes dynactin structure. The dynactin multiprotein complex activates the molecular motor dynein for ultra-processive transport along microtubules. The polypeptide is F-actin-capping protein subunit beta isoforms 1 and 2 (CAPZB) (Gallus gallus (Chicken)).